Consider the following 445-residue polypeptide: Methylphloroacetophenone oxidase (445 aa).

The chain crosses the membrane as a helical span at residues Val25–Val45. Asn51 carries N-linked (GlcNAc...) asparagine glycosylation.

This sequence belongs to the cytochrome P450 family.

Its subcellular location is the membrane. It functions in the pathway secondary metabolite biosynthesis. Methylphloroacetophenone oxidase; part of the gene cluster that mediates the biosynthesis of usnic acid, a dibenzofuran lichen product possessing a broad spectrum of biological activities. Two genes, mpas and mpao, comprise the usnic acid biosynthetic gene cluster with a single post-PKS enzyme, the methylphloracetophenone oxidase (mpao). The methylphloroacetophenone synthase (mpas) is a non-reducing polyketide synthase that produces methylphloracetophenone from acetate via a methylated tetraketide intermediate. The methylphloroacetophenone oxidase then carries out the oxidative dimerization of methylphloracetophenone to usnic acid. In Cladonia uncialis (Cup lichen), this protein is Methylphloroacetophenone oxidase.